Here is a 1685-residue protein sequence, read N- to C-terminus: Phosphatidylinositol 4-phosphate 3-kinase C2 domain-containing subunit alpha (1685 aa).

Disordered regions lie at residues 1–33 (MAQISSNSGFKECPSSHPEPTRAKDVDKEEALQ) and 41–60 (KLQKDRQVTDNQRGFELSSS). At Ala2 the chain carries N-acetylalanine. The interaction with clathrin; sufficient to induce clathrin assembly stretch occupies residues 2-142 (AQISSNSGFK…FRPTIQRGQW (141 aa)). Residues 19–31 (EPTRAKDVDKEEA) show a composition bias toward basic and acidic residues. Polar residues predominate over residues 49–60 (TDNQRGFELSSS). Phosphoserine is present on residues Ser60, Ser108, Ser259, Ser327, and Ser338. The region spanning 419–507 (NASVKVSIDI…DTEIRLQLLT (89 aa)) is the PI3K-RBD domain. At Ser628 the chain carries Phosphoserine. One can recognise a C2 PI3K-type domain in the interval 680–839 (TTEQLQFTIF…ERIVLQVDFP (160 aa)). Positions 859–1035 (QHNLETLEND…EHVLGALLSV (177 aa)) constitute a PIK helical domain. One can recognise a PI3K/PI4K catalytic domain in the interval 1103–1381 (SIKSCSFFSS…LIESSLGSIA (279 aa)). A G-loop region spans residues 1109–1115 (FFSSNAV). Positions 1245–1253 (GICDRHNDN) are catalytic loop. An activation loop region spans residues 1264–1290 (HIDFGKFLGHAQMFGTFKRDRAPFVLT). Residues 1420–1536 (GRIKEVSVFT…TFFHPLLRDE (117 aa)) form the PX domain. Residues 1486 to 1491 (RMVLGR) are interaction with PtdIns(4,5)P2-containing membranes. Position 1551 is a phosphoserine (Ser1551). The C2 domain maps to 1554–1677 (TPGQIGGAVK…NLSKETVKWY (124 aa)). A Nuclear localization signal motif is present at residues 1607–1618 (SKRKTKISRKTR).

It belongs to the PI3/PI4-kinase family. In terms of assembly, part of a complex with ERBB2 and EGFR. Interacts with clathrin trimers. Interacts with SBF2/MTMR13. The cofactor is Ca(2+). Mg(2+) is required as a cofactor. In terms of processing, phosphorylated on Ser-259 during mitosis and upon UV irradiation; which does not change enzymatic activity but leads to proteasomal degradation. Phosphorylated upon insulin stimulation; which may lead to enzyme activation.

Its subcellular location is the cell membrane. The protein localises to the cytoplasmic vesicle. The protein resides in the clathrin-coated vesicle. It is found in the nucleus. It localises to the cytoplasm. Its subcellular location is the golgi apparatus. The protein localises to the trans-Golgi network. The catalysed reaction is a 1,2-diacyl-sn-glycero-3-phospho-(1D-myo-inositol 4-phosphate) + ATP = a 1,2-diacyl-sn-glycero-3-phospho-(1D-myo-inositol-3,4-bisphosphate) + ADP + H(+). It catalyses the reaction a 1,2-diacyl-sn-glycero-3-phospho-(1D-myo-inositol) + ATP = a 1,2-diacyl-sn-glycero-3-phospho-(1D-myo-inositol-3-phosphate) + ADP + H(+). It carries out the reaction a 1,2-diacyl-sn-glycero-3-phospho-(1D-myo-inositol-4,5-bisphosphate) + ATP = a 1,2-diacyl-sn-glycero-3-phospho-(1D-myo-inositol-3,4,5-trisphosphate) + ADP + H(+). Its activity is regulated as follows. Only slightly inhibited by wortmannin and LY294002. Activated by clathrin and insulin. Generates phosphatidylinositol 3-phosphate (PtdIns3P) and phosphatidylinositol 3,4-bisphosphate (PtdIns(3,4)P2) that act as second messengers. Has a role in several intracellular trafficking events. Functions in insulin signaling and secretion. Required for translocation of the glucose transporter SLC2A4/GLUT4 to the plasma membrane and glucose uptake in response to insulin-mediated RHOQ activation. Regulates insulin secretion through two different mechanisms: involved in glucose-induced insulin secretion downstream of insulin receptor in a pathway that involves AKT1 activation and TBC1D4/AS160 phosphorylation, and participates in the late step of insulin granule exocytosis probably in insulin granule fusion. Synthesizes PtdIns3P in response to insulin signaling. Functions in clathrin-coated endocytic vesicle formation and distribution. Regulates dynamin-independent endocytosis, probably by recruiting EEA1 to internalizing vesicles. In neurosecretory cells synthesizes PtdIns3P on large dense core vesicles. Participates in calcium induced contraction of vascular smooth muscle by regulating myosin light chain (MLC) phosphorylation through a mechanism involving Rho kinase-dependent phosphorylation of the MLCP-regulatory subunit MYPT1. May play a role in the EGF signaling cascade. May be involved in mitosis and UV-induced damage response. Required for maintenance of normal renal structure and function by supporting normal podocyte function. Involved in the regulation of ciliogenesis and trafficking of ciliary components. This is Phosphatidylinositol 4-phosphate 3-kinase C2 domain-containing subunit alpha (PIK3C2A) from Pongo abelii (Sumatran orangutan).